A 613-amino-acid polypeptide reads, in one-letter code: Dihydroxy-acid dehydratase (613 aa).

Asp81 serves as a coordination point for Mg(2+). Cys122 provides a ligand contact to [2Fe-2S] cluster. Mg(2+) is bound by residues Asp123 and Lys124. Lys124 is subject to N6-carboxylysine. Residue Cys193 participates in [2Fe-2S] cluster binding. Mg(2+) is bound at residue Glu489. The Proton acceptor role is filled by Ser515.

The protein belongs to the IlvD/Edd family. Homodimer. [2Fe-2S] cluster is required as a cofactor. Mg(2+) serves as cofactor.

It catalyses the reaction (2R)-2,3-dihydroxy-3-methylbutanoate = 3-methyl-2-oxobutanoate + H2O. The catalysed reaction is (2R,3R)-2,3-dihydroxy-3-methylpentanoate = (S)-3-methyl-2-oxopentanoate + H2O. The protein operates within amino-acid biosynthesis; L-isoleucine biosynthesis; L-isoleucine from 2-oxobutanoate: step 3/4. Its pathway is amino-acid biosynthesis; L-valine biosynthesis; L-valine from pyruvate: step 3/4. Its function is as follows. Functions in the biosynthesis of branched-chain amino acids. Catalyzes the dehydration of (2R,3R)-2,3-dihydroxy-3-methylpentanoate (2,3-dihydroxy-3-methylvalerate) into 2-oxo-3-methylpentanoate (2-oxo-3-methylvalerate) and of (2R)-2,3-dihydroxy-3-methylbutanoate (2,3-dihydroxyisovalerate) into 2-oxo-3-methylbutanoate (2-oxoisovalerate), the penultimate precursor to L-isoleucine and L-valine, respectively. This is Dihydroxy-acid dehydratase from Pseudomonas putida (strain ATCC 47054 / DSM 6125 / CFBP 8728 / NCIMB 11950 / KT2440).